Consider the following 47-residue polypeptide: Cytochrome b559 subunit beta (47 aa).

A helical transmembrane segment spans residues 23-39 (WLAVHALAIPSVFFLGA). Histidine 27 contacts heme.

The protein belongs to the PsbE/PsbF family. In terms of assembly, heterodimer of an alpha subunit and a beta subunit. PSII is composed of 1 copy each of membrane proteins PsbA, PsbB, PsbC, PsbD, PsbE, PsbF, PsbH, PsbI, PsbJ, PsbK, PsbL, PsbM, PsbT, PsbX, PsbY, Psb30/Ycf12, peripheral proteins PsbO, CyanoQ (PsbQ), PsbU, PsbV and a large number of cofactors. It forms dimeric complexes. Heme b serves as cofactor.

The protein resides in the cellular thylakoid membrane. Functionally, this b-type cytochrome is tightly associated with the reaction center of photosystem II (PSII). PSII is a light-driven water:plastoquinone oxidoreductase that uses light energy to abstract electrons from H(2)O, generating O(2) and a proton gradient subsequently used for ATP formation. It consists of a core antenna complex that captures photons, and an electron transfer chain that converts photonic excitation into a charge separation. This chain is Cytochrome b559 subunit beta, found in Prochlorococcus marinus subsp. pastoris (strain CCMP1986 / NIES-2087 / MED4).